The following is a 306-amino-acid chain: Protein translocase subunit SecF (306 aa).

The next 6 helical transmembrane spans lie at 17–37 (AFAV…TKGI), 134–154 (GLGM…RFQW), 158–178 (LGAI…LSFF), 185–205 (TVLA…IVIF), 232–254 (LLRT…FFGG), and 268–288 (VMAG…WLNL).

It belongs to the SecD/SecF family. SecF subfamily. In terms of assembly, forms a complex with SecD. Part of the essential Sec protein translocation apparatus which comprises SecA, SecYEG and auxiliary proteins SecDF-YajC and YidC.

Its subcellular location is the cell inner membrane. Functionally, part of the Sec protein translocase complex. Interacts with the SecYEG preprotein conducting channel. SecDF uses the proton motive force (PMF) to complete protein translocation after the ATP-dependent function of SecA. The protein is Protein translocase subunit SecF of Pseudomonas aeruginosa (strain ATCC 15692 / DSM 22644 / CIP 104116 / JCM 14847 / LMG 12228 / 1C / PRS 101 / PAO1).